The chain runs to 441 residues: GTPase Der (441 aa).

EngA-type G domains follow at residues 2-164 (QKVA…PADE) and 173-343 (IRIS…EKWQ). GTP is bound by residues 8-15 (GRPNVGKS), 55-59 (DTGGL), 116-119 (NKID), 179-186 (GRPNVGKS), 226-230 (DTAGI), and 288-291 (NKWD). The 85-residue stretch at 344–428 (SRIPTAELNR…PVRLKWKEKG (85 aa)) folds into the KH-like domain.

This sequence belongs to the TRAFAC class TrmE-Era-EngA-EngB-Septin-like GTPase superfamily. EngA (Der) GTPase family. As to quaternary structure, associates with the 50S ribosomal subunit.

In terms of biological role, GTPase that plays an essential role in the late steps of ribosome biogenesis. The chain is GTPase Der from Deinococcus geothermalis (strain DSM 11300 / CIP 105573 / AG-3a).